The sequence spans 49 residues: Putative exported peptide YydF (49 aa).

Functionally, suggested to be the precursor for an exported, modified peptide that has antimicrobial and/or signaling properties. Synthesis requires YydG and YydH; the peptide is proposed to be exported by the YydIJ transporter. In the absence of the transporter, the modified peptide activates the LiaRS two-component regulatory system, possibly by eliciting cell envelope stress. This activation can occur in trans in cocultured cells lacking either the transporter or the whole operon. The protein is Putative exported peptide YydF (yydF) of Bacillus subtilis (strain 168).